A 252-amino-acid chain; its full sequence is Oil body-associated protein 2A (252 aa).

The segment at 1-31 is disordered; that stretch reads MASSDGKPLPTPASVGGGGGSSTAPPGQPTT. A compositionally biased stretch (low complexity) spans 22 to 31; it reads STAPPGQPTT.

Belongs to the OBAP family.

The polypeptide is Oil body-associated protein 2A (Zea mays (Maize)).